We begin with the raw amino-acid sequence, 186 residues long: MGLLDRLSGLLGLKKKEVHVLCLGLDNSGKTTIINKLKPSNAQSQDIVPTIGFSIEKFKSSSLSFTVFDMSGQGRYRNLWEHYYKDGQAIIFVIDSSDKLRMVVAKEELDTLLNHPDIKHRRIPILFFANKMDLRDSVTSVKVSQLLCLESIKDKPWHICASDAIKGEGLQEGVDWLQDQIQAVKT.

A lipid anchor (N-myristoyl glycine) is attached at Gly2. GTP contacts are provided by residues 24 to 31 (GLDNSGKT), Thr50, 69 to 73 (DMSGQ), Gly72, 130 to 133 (NKMD), and Ala164. A Mg(2+)-binding site is contributed by Thr50.

The protein belongs to the small GTPase superfamily. Arf family. As to quaternary structure, interacts with SEC61B, ARL6IP1, ARL6IP2, ARL6IP3, ARL6IP4 ARL6IP5 and ARL6IP6. Interacts (GTP-bound form) with the BBSome a complex that contains BBS1, BBS2, BBS4, BBS5, BBS7, BBS8/TTC8, BBS9 and BBIP10. Interacts (GTP-free form) with IFT27. Most abundant in brain and kidney. Expressed in heart and eye. Isoform 2 is expressed only in the retina.

The protein resides in the cell projection. The protein localises to the cilium membrane. It is found in the cytoplasm. Its subcellular location is the cytoskeleton. It localises to the cilium axoneme. The protein resides in the cilium basal body. Functionally, involved in membrane protein trafficking at the base of the ciliary organelle. Mediates recruitment onto plasma membrane of the BBSome complex which would constitute a coat complex required for sorting of specific membrane proteins to the primary cilia. Together with BBS1, is necessary for correct trafficking of PKD1 to primary cilia. Together with the BBSome complex and LTZL1, controls SMO ciliary trafficking and contributes to the sonic hedgehog (SHH) pathway regulation. May regulate cilia assembly and disassembly and subsequent ciliary signaling events such as the Wnt signaling cascade. Isoform 2 may be required for proper retinal function and organization. The polypeptide is ADP-ribosylation factor-like protein 6 (Arl6) (Mus musculus (Mouse)).